The chain runs to 56 residues: Sperm protamine P1 (56 aa).

Residues 1-56 (RLSRRRVYSIGGRRRRRRRRSRGRRGRRRGRRRGRRRGRRRGRRRRRRRGGRRRRR) form a disordered region.

P2 is phosphorylated in immature sperm. It is dephosphorylated in mature sperm allowing a stronger interaction with DNA. In terms of tissue distribution, testis.

Its subcellular location is the nucleus. It is found in the chromosome. Its function is as follows. Protamines substitute for histones in the chromatin of sperm during the haploid phase of spermatogenesis. They compact sperm DNA into a highly condensed, stable and inactive complex. Octopus spermiogenesis is characterized by a double nuclear protein transition: Histones are first replaced by P1, which allows the chromatin to adopt a shape that is not as relaxed as with histones. The majority of P1 is later replaced by P2, forming a compact chromatin. P2 is the main protamine of sperm. This is Sperm protamine P1 from Octopus vulgaris (Common octopus).